A 236-amino-acid chain; its full sequence is tRNA1(Val) (adenine(37)-N6)-methyltransferase (236 aa).

The protein belongs to the methyltransferase superfamily. tRNA (adenine-N(6)-)-methyltransferase family.

It is found in the cytoplasm. It catalyses the reaction adenosine(37) in tRNA1(Val) + S-adenosyl-L-methionine = N(6)-methyladenosine(37) in tRNA1(Val) + S-adenosyl-L-homocysteine + H(+). Specifically methylates the adenine in position 37 of tRNA(1)(Val) (anticodon cmo5UAC). The sequence is that of tRNA1(Val) (adenine(37)-N6)-methyltransferase from Histophilus somni (strain 2336) (Haemophilus somnus).